A 578-amino-acid polypeptide reads, in one-letter code: Proline--tRNA ligase (578 aa).

It belongs to the class-II aminoacyl-tRNA synthetase family. ProS type 1 subfamily. As to quaternary structure, homodimer.

It is found in the cytoplasm. It catalyses the reaction tRNA(Pro) + L-proline + ATP = L-prolyl-tRNA(Pro) + AMP + diphosphate. In terms of biological role, catalyzes the attachment of proline to tRNA(Pro) in a two-step reaction: proline is first activated by ATP to form Pro-AMP and then transferred to the acceptor end of tRNA(Pro). As ProRS can inadvertently accommodate and process non-cognate amino acids such as alanine and cysteine, to avoid such errors it has two additional distinct editing activities against alanine. One activity is designated as 'pretransfer' editing and involves the tRNA(Pro)-independent hydrolysis of activated Ala-AMP. The other activity is designated 'posttransfer' editing and involves deacylation of mischarged Ala-tRNA(Pro). The misacylated Cys-tRNA(Pro) is not edited by ProRS. The polypeptide is Proline--tRNA ligase (Burkholderia lata (strain ATCC 17760 / DSM 23089 / LMG 22485 / NCIMB 9086 / R18194 / 383)).